The chain runs to 1622 residues: FK506-binding protein 5 (1622 aa).

Residues 178–269 (GDRVSIKYAG…IFDLEVTGSK (92 aa)) form the PPIase FKBP-type domain. Residues 268–306 (SKKKEGSEPSLPSLNGQPSNAPQQSLPTQLFDNSPVPQD) are disordered. Over residues 277–303 (SLPSLNGQPSNAPQQSLPTQLFDNSPV) the composition is skewed to polar residues. At Arg314 the chain carries Omega-N-methylarginine. Disordered regions lie at residues 320–432 (RATG…GFNN) and 518–538 (SPPP…PPPP). Over residues 335-432 (ESNSRNSHSN…NMNNNNGFNN (98 aa)) the composition is skewed to low complexity. 2 coiled-coil regions span residues 607–827 (LVQT…ETER) and 854–961 (KKEE…LESQ). Disordered stretches follow at residues 1043–1097 (KQQQ…EVVV) and 1122–1622 (EEVK…VLPL). Acidic residues-rich tracts occupy residues 1050–1093 (KEEE…EEEK) and 1152–1168 (DDED…DINE). A compositionally biased stretch (basic and acidic residues) spans 1169 to 1182 (EDLKNIDAEIEKMQ). Acidic residues-rich tracts occupy residues 1185 to 1199 (MGDE…EEEK) and 1222 to 1260 (ESEE…EQED). The span at 1261–1271 (KVESDVEEKIV) shows a compositional bias: basic and acidic residues. Over residues 1320–1335 (DDDEDNEKDVASDSEE) the composition is skewed to acidic residues. The segment covering 1353-1369 (EEKVVEQVKEEINETKF) has biased composition (basic and acidic residues). Residues 1380–1412 (TTTEEKEEEKEEEKVEEEEEKVVEPPTIDDDET) are compositionally biased toward acidic residues. Composition is skewed to low complexity over residues 1435–1449 (STTA…TSST) and 1465–1504 (KTSF…TPTS). Polar residues-rich tracts occupy residues 1519–1532 (FGNS…PSTT) and 1581–1609 (AKSN…SPLT).

It belongs to the FKBP-type PPIase family.

The enzyme catalyses [protein]-peptidylproline (omega=180) = [protein]-peptidylproline (omega=0). Its activity is regulated as follows. Inhibited by both FK506 and rapamycin. Its function is as follows. PPIases accelerate the folding of proteins by catalyzing the cis-trans isomerization of proline imidic peptide bonds in oligopeptides. The polypeptide is FK506-binding protein 5 (fkbp5) (Dictyostelium discoideum (Social amoeba)).